Here is a 313-residue protein sequence, read N- to C-terminus: Olfactory receptor 10G3 (313 aa).

The Extracellular portion of the chain corresponds to 1-25 (MERINSTLLTAFILTGIPYPLRLRT). N-linked (GlcNAc...) asparagine glycosylation occurs at asparagine 5. Residues 26–46 (LFFVFFFLIYILTQLGNLLIL) traverse the membrane as a helical segment. Residues 47–54 (ITVWADPR) lie on the Cytoplasmic side of the membrane. The chain crosses the membrane as a helical span at residues 55-76 (LHARPMYIFLGVLSVIDMSISS). At 77-100 (IIVPRLMMNFTLGVKPIPFGGCVA) the chain is on the extracellular side. An N-linked (GlcNAc...) asparagine glycan is attached at asparagine 85. A disulfide bond links cysteine 98 and cysteine 190. A helical membrane pass occupies residues 101–121 (QLYFYHFLGSTQCFLYTLMAY). At 122–140 (DRYLAICQPLRYPVLMTAK) the chain is on the cytoplasmic side. A helical transmembrane segment spans residues 141–161 (LSALLVAGAWMAGSIHGALQA). At 162 to 198 (ILTFRLPYCGPNQVDYFFCDIPAVLRLACADTTVNEL) the chain is on the extracellular side. The helical transmembrane segment at 199–218 (VTFVDIGVVVASCFSLILLS) threads the bilayer. Topologically, residues 219–238 (YIQIIQAILRIHTADGRRRA) are cytoplasmic. Residues 239–259 (FSTCGAHVTVVTVYYVPCAFI) traverse the membrane as a helical segment. At 260 to 270 (YLRPETNSPLD) the chain is on the extracellular side. The chain crosses the membrane as a helical span at residues 271–291 (GAAALVPTAITPFLNPLIYTL). Over 292-313 (RNQEVKLALKRMLRSPRTPSEV) the chain is Cytoplasmic.

This sequence belongs to the G-protein coupled receptor 1 family.

The protein localises to the cell membrane. Functionally, odorant receptor. The polypeptide is Olfactory receptor 10G3 (OR10G3) (Homo sapiens (Human)).